The primary structure comprises 433 residues: 3-phosphoshikimate 1-carboxyvinyltransferase (433 aa).

3-phosphoshikimate is bound by residues lysine 22, serine 23, and arginine 27. Lysine 22 is a phosphoenolpyruvate binding site. Glycine 95 and arginine 123 together coordinate phosphoenolpyruvate. Positions 167, 169, 315, and 342 each coordinate 3-phosphoshikimate. Residue glutamine 169 coordinates phosphoenolpyruvate. The active-site Proton acceptor is the aspartate 315. Residues arginine 346 and arginine 387 each contribute to the phosphoenolpyruvate site.

The protein belongs to the EPSP synthase family. As to quaternary structure, monomer.

The protein localises to the cytoplasm. The catalysed reaction is 3-phosphoshikimate + phosphoenolpyruvate = 5-O-(1-carboxyvinyl)-3-phosphoshikimate + phosphate. Its pathway is metabolic intermediate biosynthesis; chorismate biosynthesis; chorismate from D-erythrose 4-phosphate and phosphoenolpyruvate: step 6/7. Functionally, catalyzes the transfer of the enolpyruvyl moiety of phosphoenolpyruvate (PEP) to the 5-hydroxyl of shikimate-3-phosphate (S3P) to produce enolpyruvyl shikimate-3-phosphate and inorganic phosphate. This is 3-phosphoshikimate 1-carboxyvinyltransferase from Legionella pneumophila (strain Paris).